Reading from the N-terminus, the 343-residue chain is Cytoplasmic tRNA 2-thiolation protein 1 (343 aa).

The protein belongs to the TtcA family. CTU1/NCS6/ATPBD3 subfamily.

Its subcellular location is the cytoplasm. The protein operates within tRNA modification; 5-methoxycarbonylmethyl-2-thiouridine-tRNA biosynthesis. In terms of biological role, plays a central role in 2-thiolation of mcm(5)S(2)U at tRNA wobble positions of tRNA(Lys), tRNA(Glu) and tRNA(Gln). Directly binds tRNAs and probably acts by catalyzing adenylation of tRNAs, an intermediate required for 2-thiolation. It is unclear whether it acts as a sulfurtransferase that transfers sulfur from thiocarboxylated URM1 onto the uridine of tRNAs at wobble position. The sequence is that of Cytoplasmic tRNA 2-thiolation protein 1 from Drosophila pseudoobscura pseudoobscura (Fruit fly).